Reading from the N-terminus, the 97-residue chain is Large ribosomal subunit protein bL28 (97 aa).

Belongs to the bacterial ribosomal protein bL28 family.

The chain is Large ribosomal subunit protein bL28 from Rickettsia felis (strain ATCC VR-1525 / URRWXCal2) (Rickettsia azadi).